The sequence spans 86 residues: Large ribosomal subunit protein bL31 (86 aa).

A disordered region spans residues 65–86 (YGMGSANSATSKEQKEEKDSKK). The segment covering 76–86 (KEQKEEKDSKK) has biased composition (basic and acidic residues).

The protein belongs to the bacterial ribosomal protein bL31 family. Type A subfamily. In terms of assembly, part of the 50S ribosomal subunit.

Binds the 23S rRNA. This chain is Large ribosomal subunit protein bL31, found in Prochlorococcus marinus (strain AS9601).